Consider the following 356-residue polypeptide: MQFTALLAALGAPLALAASIPAAAHNHSMIDVQLAATGNSMIKATITNTGDRTLNLLKFNTIMDEHPTRKVMVYQDGAEVQFTGMLPRYKMSDLTPEYFVNLGPKASVEHSFDLAATHDLSRGGKIVVKAHGMVPTAEENATTITGHTLYESNELTMDVDGKQAAAVEQAMGGDDSTGVIDKRSNIVTSSCRGSQLRVLQTALSNASRLSRAAASAAQRNPSKMREYFKTADSRTVQKVASRFLSVARESSSGSTGRTTYYCNDNRGGCHPGVLAYTLPSKNQVFNCPSYYQLPALNNRCHGQDQATTTLHELTHNPAVVTPFCEDLGYGYQRVSALPASKAIQNADTYSLFANGM.

The N-terminal stretch at 1 to 17 (MQFTALLAALGAPLALA) is a signal peptide. Positions 18–183 (ASIPAAAHNH…DDSTGVIDKR (166 aa)) are excised as a propeptide. Intrachain disulfides connect cysteine 191–cysteine 262 and cysteine 269–cysteine 287. An N-linked (GlcNAc...) asparagine glycan is attached at asparagine 205. Position 311 (histidine 311) interacts with Zn(2+). The active site involves glutamate 312. Zn(2+) is bound by residues histidine 315 and aspartate 326.

It belongs to the peptidase M35 family. Requires Zn(2+) as cofactor.

Its subcellular location is the secreted. It catalyses the reaction Preferential cleavage of bonds with hydrophobic residues in P1'. Also 3-Asn-|-Gln-4 and 8-Gly-|-Ser-9 bonds in insulin B chain.. Functionally, probable secreted metalloprotease that shows high activities on basic nuclear substrates such as histone and protamine. May be involved in virulence. The sequence is that of Probable neutral protease 2 homolog ARB_04769 from Arthroderma benhamiae (strain ATCC MYA-4681 / CBS 112371) (Trichophyton mentagrophytes).